The sequence spans 349 residues: tRNA pseudouridine synthase D (349 aa).

A substrate-binding site is contributed by Phe-27. The active-site Nucleophile is Asp-80. Residue Asn-129 participates in substrate binding. Residues 155-303 (GVPNYFGAQR…VEAARRAMLL (149 aa)) form the TRUD domain. Phe-329 lines the substrate pocket.

Belongs to the pseudouridine synthase TruD family.

It catalyses the reaction uridine(13) in tRNA = pseudouridine(13) in tRNA. Functionally, responsible for synthesis of pseudouridine from uracil-13 in transfer RNAs. The sequence is that of tRNA pseudouridine synthase D from Shigella boydii serotype 18 (strain CDC 3083-94 / BS512).